The following is a 291-amino-acid chain: MRWPPWASESQAQQHNTKPPIEHNEKEHGSKSKSWESSVTAIDWAAFAEPRTIIPTVILTSGFLGAFHIHRRYLRRFPDAGSITPSHFRRRSLLGRVTSVGDGDNFRLYHTPGGRLAGWGWLPWKKVPTSKKELRDKTVHIRLAGVDAPELAHFGRPEQPFAREAHQWLTSYLLNRRVRAYIHRPDQYQRAVATVYVRRALDFPIPFRRRDVSYEMLKQGLATVYEAKWGAEFGGEAMERKYRKAEWWAKLRGTGLWKDFRRNEKEWESPRAYKTRMGLEEAVQPRVESKK.

Residues 1–34 (MRWPPWASESQAQQHNTKPPIEHNEKEHGSKSKS) form a disordered region. Residues 8 to 17 (SESQAQQHNT) are compositionally biased toward polar residues. Positions 20-34 (PIEHNEKEHGSKSKS) are enriched in basic and acidic residues. The helical transmembrane segment at 53-69 (IIPTVILTSGFLGAFHI) threads the bilayer. The TNase-like domain occupies 91–259 (RSLLGRVTSV…KLRGTGLWKD (169 aa)). Arginine 142 is a catalytic residue. Residue aspartate 147 coordinates Ca(2+). Residues glutamate 150 and arginine 190 contribute to the active site.

This sequence belongs to the LCL3 family.

It is found in the mitochondrion. The protein resides in the membrane. This chain is Probable endonuclease lcl3 (lcl3), found in Aspergillus clavatus (strain ATCC 1007 / CBS 513.65 / DSM 816 / NCTC 3887 / NRRL 1 / QM 1276 / 107).